Reading from the N-terminus, the 143-residue chain is Flagellar assembly factor FliW (143 aa).

Belongs to the FliW family. Interacts with translational regulator CsrA and flagellin(s).

It is found in the cytoplasm. In terms of biological role, acts as an anti-CsrA protein, binds CsrA and prevents it from repressing translation of its target genes, one of which is flagellin. Binds to flagellin and participates in the assembly of the flagellum. The protein is Flagellar assembly factor FliW of Bacillus licheniformis (strain ATCC 14580 / DSM 13 / JCM 2505 / CCUG 7422 / NBRC 12200 / NCIMB 9375 / NCTC 10341 / NRRL NRS-1264 / Gibson 46).